The chain runs to 122 residues: uncharacterized protein (122 aa).

The helical transmembrane segment at 93-113 (ILRICIVFLSLKIYTLTLVII) threads the bilayer.

The protein resides in the membrane. This is an uncharacterized protein from Saccharomyces cerevisiae (strain ATCC 204508 / S288c) (Baker's yeast).